A 622-amino-acid polypeptide reads, in one-letter code: Iron transport multicopper oxidase FET5 (622 aa).

A signal peptide spans 1 to 18; that stretch reads MLFYSFVWSVLAASVALA. Topologically, residues 19 to 573 are extracellular; sequence KTHKLNYTAS…PKGFTTEGYL (555 aa). N-linked (GlcNAc...) asparagine glycosylation is present at asparagine 24. 2 consecutive Plastocyanin-like domains span residues 43–146 and 192–301; these read IGFN…FIIH and NILF…IQMR. Residues histidine 79 and histidine 81 each coordinate Cu cation. N-linked (GlcNAc...) asparagine glycosylation is found at asparagine 86 and asparagine 115. 2 residues coordinate Cu cation: histidine 128 and histidine 130. N-linked (GlcNAc...) asparagine glycans are attached at residues asparagine 196, asparagine 200, asparagine 246, asparagine 295, and asparagine 364. Residues 392–514 enclose the Plastocyanin-like 3 domain; that stretch reads GDNINAQLLK…QGLASVFIEA (123 aa). Residues histidine 418, histidine 421, and histidine 423 each coordinate Cu cation. Asparagine 455 is a glycosylation site (N-linked (GlcNAc...) asparagine). 4 residues coordinate Cu cation: histidine 496, cysteine 497, histidine 498, and histidine 502. The helical transmembrane segment at 574-594 threads the bilayer; sequence ALIISTIIGVWGLYSIAQYGI. Over 595-622 the chain is Cytoplasmic; it reads GEVIPNDEKVYHTLREILAENEIEVSRG.

The protein belongs to the multicopper oxidase family. As to quaternary structure, interacts with FTH1. Cu cation is required as a cofactor.

The protein localises to the cell membrane. In terms of biological role, iron transport multicopper oxidase, which is required for Fe(2+) high affinity uptake. May be required to oxidize Fe(2+) and release it from the transporter. Essential component of copper-dependent iron transport. This Saccharomyces cerevisiae (strain ATCC 204508 / S288c) (Baker's yeast) protein is Iron transport multicopper oxidase FET5 (FET5).